The following is a 230-amino-acid chain: Ribosome maturation factor RimM (230 aa).

In terms of domain architecture, PRC barrel spans 149 to 230 (ADEFYWVDLI…RVVVDWEADY (82 aa)).

The protein belongs to the RimM family. As to quaternary structure, binds ribosomal protein uS19.

The protein resides in the cytoplasm. Its function is as follows. An accessory protein needed during the final step in the assembly of 30S ribosomal subunit, possibly for assembly of the head region. Essential for efficient processing of 16S rRNA. May be needed both before and after RbfA during the maturation of 16S rRNA. It has affinity for free ribosomal 30S subunits but not for 70S ribosomes. In Burkholderia mallei (strain NCTC 10229), this protein is Ribosome maturation factor RimM.